Here is a 121-residue protein sequence, read N- to C-terminus: Histone H2B, sperm (121 aa).

A disordered region spans residues 1–30 (MPPKSGKGQKKAGKAKGAPRSDKKRRRKRK). Pro2 is modified (n,N-dimethylproline). The O-linked (GlcNAc) serine glycan is linked to Ser108. A Glycyl lysine isopeptide (Lys-Gly) (interchain with G-Cter in ubiquitin) cross-link involves residue Lys116.

It belongs to the histone H2B family. In terms of assembly, the nucleosome is a histone octamer containing two molecules each of H2A, H2B, H3 and H4 assembled in one H3-H4 heterotetramer and two H2A-H2B heterodimers. The octamer wraps approximately 147 bp of DNA. In terms of processing, monoubiquitination of Lys-116 gives a specific tag for epigenetic transcriptional activation and is also prerequisite for histone H3 'Lys-4' and 'Lys-79' methylation. Post-translationally, glcNAcylation at Ser-108 promotes monoubiquitination of Lys-116. It fluctuates in response to extracellular glucose, and associates with transcribed genes.

It localises to the nucleus. The protein localises to the chromosome. Its function is as follows. Core component of nucleosome. Nucleosomes wrap and compact DNA into chromatin, limiting DNA accessibility to the cellular machineries which require DNA as a template. Histones thereby play a central role in transcription regulation, DNA repair, DNA replication and chromosomal stability. DNA accessibility is regulated via a complex set of post-translational modifications of histones, also called histone code, and nucleosome remodeling. In Marthasterias glacialis (Spiny starfish), this protein is Histone H2B, sperm.